Reading from the N-terminus, the 304-residue chain is 1D-myo-inositol 2-acetamido-2-deoxy-alpha-D-glucopyranoside deacetylase 2 (304 aa).

His17, Asp20, and His152 together coordinate Zn(2+).

It belongs to the MshB deacetylase family. It depends on Zn(2+) as a cofactor.

It catalyses the reaction 1D-myo-inositol 2-acetamido-2-deoxy-alpha-D-glucopyranoside + H2O = 1D-myo-inositol 2-amino-2-deoxy-alpha-D-glucopyranoside + acetate. In terms of biological role, catalyzes the deacetylation of 1D-myo-inositol 2-acetamido-2-deoxy-alpha-D-glucopyranoside (GlcNAc-Ins) in the mycothiol biosynthesis pathway. The polypeptide is 1D-myo-inositol 2-acetamido-2-deoxy-alpha-D-glucopyranoside deacetylase 2 (Catenulispora acidiphila (strain DSM 44928 / JCM 14897 / NBRC 102108 / NRRL B-24433 / ID139908)).